We begin with the raw amino-acid sequence, 234 residues long: Melanoregulin (234 aa).

Positions 215-234 (MNQNISGGEDEDEDESEPDD) are disordered. Residues 222–234 (GEDEDEDESEPDD) show a composition bias toward acidic residues.

This sequence belongs to the melanoregulin family.

The protein resides in the apical cell membrane. The protein localises to the melanosome membrane. It localises to the lysosome membrane. It is found in the cytoplasmic vesicle membrane. In terms of biological role, probably functions as a cargo-recognition protein that couples cytoplasmic vesicles to the transport machinery. Contributes to retrograde melanosome transport from the cell periphery to the center. Overexpression causes accumulation of late endosomes and/or lysosomes at the microtubule organising center (MTOC) at the center of the cell. Probably binds cholesterol and requires the presence of cholesterol in membranes to function in microtubule-mediated retrograde organelle transport. Binds phosphatidylinositol 3-phosphate, phosphatidylinositol 4-phosphate, phosphatidylinositol 5-phosphate and phosphatidylinositol 3,5-bisphosphate. The sequence is that of Melanoregulin (mreg) from Danio rerio (Zebrafish).